The chain runs to 195 residues: Imidazoleglycerol-phosphate dehydratase (195 aa).

This sequence belongs to the imidazoleglycerol-phosphate dehydratase family.

The protein resides in the cytoplasm. It carries out the reaction D-erythro-1-(imidazol-4-yl)glycerol 3-phosphate = 3-(imidazol-4-yl)-2-oxopropyl phosphate + H2O. It participates in amino-acid biosynthesis; L-histidine biosynthesis; L-histidine from 5-phospho-alpha-D-ribose 1-diphosphate: step 6/9. The polypeptide is Imidazoleglycerol-phosphate dehydratase (Deinococcus radiodurans (strain ATCC 13939 / DSM 20539 / JCM 16871 / CCUG 27074 / LMG 4051 / NBRC 15346 / NCIMB 9279 / VKM B-1422 / R1)).